We begin with the raw amino-acid sequence, 632 residues long: Gamma-aminobutyric acid receptor subunit theta (632 aa).

The signal sequence occupies residues 1-21 (MGIRGMLRAAVILLLIRTWLA). The Extracellular segment spans residues 22-268 (EGNYPSPIPK…FQVQREVNSY (247 aa)). N-linked (GlcNAc...) asparagine glycosylation occurs at N127. The cysteines at positions 183 and 197 are disulfide-linked. Residues 269–289 (LVQVYWPTVLTTITSWISFWM) form a helical membrane-spanning segment. Residues 290 to 297 (NYDSSAAR) lie on the Cytoplasmic side of the membrane. A helical transmembrane segment spans residues 298–315 (VTIGLTSMLILTTIDSHL). At 316 to 326 (RDKLPNISCIK) the chain is on the extracellular side. Residues 327–347 (AIDIYILVCLFFVFLSLLEYV) traverse the membrane as a helical segment. At 348–611 (YINYLFYSRG…DYVPKVDKWS (264 aa)) the chain is on the cytoplasmic side. 2 disordered regions span residues 410–458 (SPES…STSE) and 491–523 (HGVT…LHHG). Over residues 413–425 (SLGSLTSTSEQAQ) the composition is skewed to polar residues. Low complexity predominate over residues 426 to 439 (LATSESLSPLTSLS). Residues 448–458 (ESLSDLPSTSE) show a composition bias toward polar residues. The segment covering 491-511 (HGVTHDHEDSNESLSSDERHG) has biased composition (basic and acidic residues). Residues 612–632 (RFLFPLAFGLFNIVYWVYHMY) form a helical membrane-spanning segment.

This sequence belongs to the ligand-gated ion channel (TC 1.A.9) family. Gamma-aminobutyric acid receptor (TC 1.A.9.5) subfamily. GABRQ sub-subfamily. As to quaternary structure, heteropentamer, formed by a combination of alpha (GABRA1-6), beta (GABRB1-3), gamma (GABRG1-3), delta (GABRD), epsilon (GABRE), rho (GABRR1-3), pi (GABRP) and theta (GABRQ) chains, each subunit exhibiting distinct physiological and pharmacological properties. As to expression, expressed in brain.

The protein localises to the postsynaptic cell membrane. It localises to the cell membrane. It catalyses the reaction chloride(in) = chloride(out). With respect to regulation, potentiated by etomidate, propofol, pregnanolone and pentobarbital. Functionally, theta subunit of the heteropentameric ligand-gated chloride channel gated by gamma-aminobutyric acid (GABA), a major inhibitory neurotransmitter in the brain. GABA-gated chloride channels, also named GABA(A) receptors (GABAAR), consist of five subunits arranged around a central pore and contain GABA active binding site(s) located at the alpha and beta subunit interfaces. When activated by GABA, GABAARs selectively allow the flow of chloride anions across the cell membrane down their electrochemical gradient. This chain is Gamma-aminobutyric acid receptor subunit theta, found in Homo sapiens (Human).